The chain runs to 125 residues: Large ribosomal subunit protein bL12 (125 aa).

The protein belongs to the bacterial ribosomal protein bL12 family. In terms of assembly, homodimer. Part of the ribosomal stalk of the 50S ribosomal subunit. Forms a multimeric L10(L12)X complex, where L10 forms an elongated spine to which 2 to 4 L12 dimers bind in a sequential fashion. Binds GTP-bound translation factors.

Forms part of the ribosomal stalk which helps the ribosome interact with GTP-bound translation factors. Is thus essential for accurate translation. The protein is Large ribosomal subunit protein bL12 of Azoarcus sp. (strain BH72).